Reading from the N-terminus, the 105-residue chain is Thioredoxin (105 aa).

The Thioredoxin domain occupies Val-1–Ala-105. Catalysis depends on nucleophile residues Cys-29 and Cys-32. A disulfide bridge connects residues Cys-29 and Cys-32.

The protein belongs to the thioredoxin family. Monomer.

In terms of biological role, participates in various redox reactions through the reversible oxidation of its active center dithiol to a disulfide and catalyzes dithiol-disulfide exchange reactions. The protein is Thioredoxin of Malassezia sympodialis (Atopic eczema-associated yeast).